An 86-amino-acid chain; its full sequence is FVNQHLCGSHLVEALYLVCGERGFFYTPKAXXEAEDPQVGEVELGGGPGLGGLQPLALAGPQQXXGIVEQCCTGICSLYQLENYCN.

3 disulfides stabilise this stretch: C7/C72, C19/C85, and C71/C76. A propeptide spans 33-63 (c peptide); sequence EAEDPQVGEVELGGGPGLGGLQPLALAGPQQ.

The protein belongs to the insulin family. As to quaternary structure, heterodimer of a B chain and an A chain linked by two disulfide bonds.

It is found in the secreted. Insulin decreases blood glucose concentration. It increases cell permeability to monosaccharides, amino acids and fatty acids. It accelerates glycolysis, the pentose phosphate cycle, and glycogen synthesis in liver. The polypeptide is Insulin (INS) (Equus caballus (Horse)).